Reading from the N-terminus, the 134-residue chain is Small ribosomal subunit protein uS8 (134 aa).

The protein belongs to the universal ribosomal protein uS8 family. In terms of assembly, part of the 30S ribosomal subunit. Contacts proteins S5 and S12.

One of the primary rRNA binding proteins, it binds directly to 16S rRNA central domain where it helps coordinate assembly of the platform of the 30S subunit. This is Small ribosomal subunit protein uS8 from Sphingopyxis alaskensis (strain DSM 13593 / LMG 18877 / RB2256) (Sphingomonas alaskensis).